The sequence spans 337 residues: Endochitinase 37 (337 aa).

Positions 1–25 (MTRLLDASFLLLPVIASTLFGTASA) are cleaved as a signal peptide. Residues 38–337 (KVLQGYWENW…GSKNWTFGDN (300 aa)) form the GH18 domain. Glu160 serves as the catalytic Proton donor. The N-linked (GlcNAc...) asparagine glycan is linked to Asn331.

Belongs to the glycosyl hydrolase 18 family. Chitinase class V subfamily. In terms of assembly, monomer.

The protein resides in the secreted. The enzyme catalyses Random endo-hydrolysis of N-acetyl-beta-D-glucosaminide (1-&gt;4)-beta-linkages in chitin and chitodextrins.. In terms of biological role, secreted chitinase involved in the degradation of chitin, a component of the cell walls of fungi and exoskeletal elements of some animals (including worms and arthropods). Plays a morphogenetic role during apical growth, cell division and differentiation (cell wall morphogenesis). May be involved in the degradation and further assimilation of phytopathogenic fungi, namely mycoparasitism, the major mechanism accounting for the antagonistic activity against phytopathogenic fungi displayed by Trichoderma. The protein is Endochitinase 37 (chit37) of Trichoderma harzianum (Hypocrea lixii).